A 141-amino-acid polypeptide reads, in one-letter code: MMKFIALFALVAVASAGKMTFKDCGHGEVTELDITGCSGDTCVIHRGEKMTLEAKFAANQDTAKVTIKVLAKVAGTTIQVPGLETDGCKFIKCPVKKGEALDFIYSGTIPAITPKVKADVTAELIGDHGVMACGTVHGQVE.

The N-terminal stretch at 1–16 (MMKFIALFALVAVASA) is a signal peptide. Intrachain disulfides connect Cys24–Cys133, Cys37–Cys42, and Cys88–Cys93. Tandem repeats lie at residues 64 to 65 (KV), 68 to 69 (KV), and 72 to 73 (KV). A 3 X 2 AA repeats of K-V region spans residues 64–73 (KVTIKVLAKV).

It belongs to the NPC2 family. As to quaternary structure, monomer.

The protein localises to the secreted. This Lepidoglyphus destructor (Storage mite) protein is Mite group 2 allergen Lep d 2.